The primary structure comprises 424 residues: Hemagglutinin-esterase (424 aa).

Signal peptides lie at residues 1-16 (MFLL…IIGS) and 1-18 (MFLL…GSLG). Residues 7–127 (FVLVSCIIGS…SNDIWMQNKG (121 aa)) are esterase domain 1. Residues 17 to 392 (LGFDNPPTNV…PICVYDPLPL (376 aa)) are Virion surface-facing. Catalysis depends on serine 40, which acts as the Nucleophile. Cysteine 44 and cysteine 65 are oxidised to a cystine. Asparagine 54, asparagine 89, asparagine 153, asparagine 236, and asparagine 301 each carry an N-linked (GlcNAc...) asparagine; by host glycan. Disulfide bonds link cysteine 113–cysteine 162, cysteine 197–cysteine 276, and cysteine 205–cysteine 249. The interval 128 to 266 (LFYTQVYKNM…GNYLAISNEL (139 aa)) is receptor binding. The esterase domain 2 stretch occupies residues 267-379 (LLTVPTKAIC…RCPTAADINT (113 aa)). Cysteines 307 and 312 form a disulfide. Asparagine 316 is a glycosylation site (N-linked (GlcNAc...) asparagine; by host). Residues aspartate 326 and histidine 329 each act as charge relay system in the active site. Cysteines 347 and 371 form a disulfide. Asparagine 358 carries N-linked (GlcNAc...) asparagine; by host glycosylation. Residues 393–413 (ILLGILLGVAVIIIVVLLLYF) form a helical membrane-spanning segment. Residues 414–424 (MVDNGTRLHDA) lie on the Intravirion side of the membrane. N-linked (GlcNAc...) asparagine; by host glycosylation occurs at asparagine 417.

It belongs to the influenza type C/coronaviruses hemagglutinin-esterase family. In terms of assembly, homodimer; disulfide-linked. Forms a complex with the M protein in the pre-Golgi. Associates then with S-M complex to form a ternary complex S-M-HE. N-glycosylated in the host RER.

It is found in the virion membrane. The protein localises to the host cell membrane. It carries out the reaction N-acetyl-9-O-acetylneuraminate + H2O = N-acetylneuraminate + acetate + H(+). The enzyme catalyses N-acetyl-4-O-acetylneuraminate + H2O = N-acetylneuraminate + acetate + H(+). Functionally, structural protein that makes short spikes at the surface of the virus. Contains receptor binding and receptor-destroying activities. Mediates de-O-acetylation of N-acetyl-4-O-acetylneuraminic acid, which is probably the receptor determinant recognized by the virus on the surface of erythrocytes and susceptible cells. This receptor-destroying activity is important for virus release as it probably helps preventing self-aggregation and ensures the efficient spread of the progeny virus from cell to cell. May serve as a secondary viral attachment protein for initiating infection, the spike protein being the major one. May become a target for both the humoral and the cellular branches of the immune system. In Bos taurus (Bovine), this protein is Hemagglutinin-esterase.